Here is a 507-residue protein sequence, read N- to C-terminus: Probable malate:quinone oxidoreductase 2 (507 aa).

Belongs to the MQO family. FAD serves as cofactor.

It carries out the reaction (S)-malate + a quinone = a quinol + oxaloacetate. Its pathway is carbohydrate metabolism; tricarboxylic acid cycle; oxaloacetate from (S)-malate (quinone route): step 1/1. The chain is Probable malate:quinone oxidoreductase 2 from Pseudomonas aeruginosa (strain ATCC 15692 / DSM 22644 / CIP 104116 / JCM 14847 / LMG 12228 / 1C / PRS 101 / PAO1).